The sequence spans 292 residues: Ribosomal RNA small subunit methyltransferase I (292 aa).

The protein belongs to the methyltransferase superfamily. RsmI family.

It is found in the cytoplasm. The catalysed reaction is cytidine(1402) in 16S rRNA + S-adenosyl-L-methionine = 2'-O-methylcytidine(1402) in 16S rRNA + S-adenosyl-L-homocysteine + H(+). Catalyzes the 2'-O-methylation of the ribose of cytidine 1402 (C1402) in 16S rRNA. This chain is Ribosomal RNA small subunit methyltransferase I, found in Bacillus subtilis (strain 168).